The primary structure comprises 262 residues: ATP synthase subunit a (262 aa).

The next 5 membrane-spanning stretches (helical) occupy residues Val-26–Ser-46, Val-86–Ile-106, Asp-130–Ile-150, Leu-204–Leu-226, and Leu-240–Ala-260.

This sequence belongs to the ATPase A chain family. F-type ATPases have 2 components, CF(1) - the catalytic core - and CF(0) - the membrane proton channel. CF(1) has five subunits: alpha(3), beta(3), gamma(1), delta(1), epsilon(1). CF(0) has three main subunits: a(1), b(2) and c(9-12). The alpha and beta chains form an alternating ring which encloses part of the gamma chain. CF(1) is attached to CF(0) by a central stalk formed by the gamma and epsilon chains, while a peripheral stalk is formed by the delta and b chains.

Its subcellular location is the cell inner membrane. Functionally, key component of the proton channel; it plays a direct role in the translocation of protons across the membrane. This Haemophilus influenzae (strain 86-028NP) protein is ATP synthase subunit a.